The primary structure comprises 148 residues: Large ribosomal subunit protein bL9 (148 aa).

Belongs to the bacterial ribosomal protein bL9 family.

Binds to the 23S rRNA. This chain is Large ribosomal subunit protein bL9, found in Acinetobacter baumannii (strain AB307-0294).